A 285-amino-acid polypeptide reads, in one-letter code: Acetyl-coenzyme A carboxylase carboxyl transferase subunit beta (285 aa).

The region spanning 22 to 285 is the CoA carboxyltransferase N-terminal domain; sequence LWTKCEACGA…HPGVAYAPGV (264 aa). Residues Cys-26, Cys-29, Cys-45, and Cys-48 each coordinate Zn(2+). The segment at 26–48 adopts a C4-type zinc-finger fold; it reads CEACGAQIYKKEFQENLHVCPKC.

This sequence belongs to the AccD/PCCB family. In terms of assembly, acetyl-CoA carboxylase is a heterohexamer composed of biotin carboxyl carrier protein (AccB), biotin carboxylase (AccC) and two subunits each of ACCase subunit alpha (AccA) and ACCase subunit beta (AccD). Zn(2+) serves as cofactor.

Its subcellular location is the cytoplasm. The enzyme catalyses N(6)-carboxybiotinyl-L-lysyl-[protein] + acetyl-CoA = N(6)-biotinyl-L-lysyl-[protein] + malonyl-CoA. The protein operates within lipid metabolism; malonyl-CoA biosynthesis; malonyl-CoA from acetyl-CoA: step 1/1. Functionally, component of the acetyl coenzyme A carboxylase (ACC) complex. Biotin carboxylase (BC) catalyzes the carboxylation of biotin on its carrier protein (BCCP) and then the CO(2) group is transferred by the transcarboxylase to acetyl-CoA to form malonyl-CoA. The sequence is that of Acetyl-coenzyme A carboxylase carboxyl transferase subunit beta from Thermus thermophilus (strain ATCC 27634 / DSM 579 / HB8).